Here is a 264-residue protein sequence, read N- to C-terminus: 3-methyl-2-oxobutanoate hydroxymethyltransferase (264 aa).

Mg(2+)-binding residues include aspartate 45 and aspartate 84. Residues aspartate 45–serine 46, aspartate 84, and lysine 112 each bind 3-methyl-2-oxobutanoate. Glutamate 114 contacts Mg(2+). The active-site Proton acceptor is the glutamate 181.

This sequence belongs to the PanB family. In terms of assembly, homodecamer; pentamer of dimers. The cofactor is Mg(2+).

Its subcellular location is the cytoplasm. It catalyses the reaction 3-methyl-2-oxobutanoate + (6R)-5,10-methylene-5,6,7,8-tetrahydrofolate + H2O = 2-dehydropantoate + (6S)-5,6,7,8-tetrahydrofolate. It participates in cofactor biosynthesis; (R)-pantothenate biosynthesis; (R)-pantoate from 3-methyl-2-oxobutanoate: step 1/2. Its function is as follows. Catalyzes the reversible reaction in which hydroxymethyl group from 5,10-methylenetetrahydrofolate is transferred onto alpha-ketoisovalerate to form ketopantoate. This chain is 3-methyl-2-oxobutanoate hydroxymethyltransferase, found in Shewanella amazonensis (strain ATCC BAA-1098 / SB2B).